The sequence spans 86 residues: Small ribosomal subunit protein uS17 (86 aa).

The protein belongs to the universal ribosomal protein uS17 family. Part of the 30S ribosomal subunit.

In terms of biological role, one of the primary rRNA binding proteins, it binds specifically to the 5'-end of 16S ribosomal RNA. This Desulfotalea psychrophila (strain LSv54 / DSM 12343) protein is Small ribosomal subunit protein uS17.